Reading from the N-terminus, the 89-residue chain is Large ribosomal subunit protein bL27 (89 aa).

The tract at residues 1–20 (MAHKKAGGSSRNGRDSAGQR) is disordered.

This sequence belongs to the bacterial ribosomal protein bL27 family.

This chain is Large ribosomal subunit protein bL27, found in Paramagnetospirillum magneticum (strain ATCC 700264 / AMB-1) (Magnetospirillum magneticum).